Consider the following 668-residue polypeptide: Neurexin-3-beta (668 aa).

Positions 1–35 are cleaved as a signal peptide; the sequence is MHLRTNPSICPGRRPAWTLWMCSLFWGCIVSSVWS. At 36-593 the chain is on the extracellular side; it reads SSNVASSASS…EVVRESSSTT (558 aa). The region spanning 84–284 is the Laminin G-like domain; sequence ATYIFGKSGG…NPNIKINGSV (201 aa). A disordered region spans residues 510–529; that stretch reads TASSSTGMVPKLPAGKMNNR. A helical transmembrane segment spans residues 594–614; the sequence is GMVVGIVAAAALCILILLYAM. The Cytoplasmic segment spans residues 615–668; the sequence is YKYRNRDEGSYQVDETRNYISNSAQSNGTLMKEKQQSSKSGHKKQKNKDKEYYV. A disordered region spans residues 636 to 668; the sequence is NSAQSNGTLMKEKQQSSKSGHKKQKNKDKEYYV.

Belongs to the neurexin family. Post-translationally, processed by alpha-secretase leading to the formation of an extracellular soluble protein as well as a C-terminal membrane-embedded fragment (CTF). Proteolysis of these CTFs by gamma-secretase releases intracellular domains (ICDs) and extracellular peptides. As to expression, brain and arteries (at protein level).

Its subcellular location is the membrane. In terms of biological role, neuronal cell surface protein that may be involved in cell recognition and cell adhesion. Plays a role in angiogenesis. This chain is Neurexin-3-beta (NRXN3), found in Gallus gallus (Chicken).